A 366-amino-acid polypeptide reads, in one-letter code: Putative transcription factor PHD1 (366 aa).

One can recognise an HTH APSES-type domain in the interval 186–292 (RVITTMWEDE…KDIESIVDAR (107 aa)). The segment at residues 220 to 241 (GTKLLNVTKMTRGRRDGILRSE) is a DNA-binding region (H-T-H motif). Residues 294–366 (PSNKASLTPK…QTSRAKNELS (73 aa)) form a disordered region. The span at 312-328 (EPSDNKHEIATEIKPKS) shows a compositional bias: basic and acidic residues.

Belongs to the EFG1/PHD1/stuA family.

The protein resides in the nucleus. Functionally, putative transcription factor that functions in pseudohyphal growth. The chain is Putative transcription factor PHD1 (PHD1) from Saccharomyces cerevisiae (strain ATCC 204508 / S288c) (Baker's yeast).